An 87-amino-acid chain; its full sequence is Putative regulatory protein GK1166 (87 aa).

It belongs to the RemA family.

This is Putative regulatory protein GK1166 from Geobacillus kaustophilus (strain HTA426).